We begin with the raw amino-acid sequence, 122 residues long: Large ribosomal subunit protein uL14 (122 aa).

Belongs to the universal ribosomal protein uL14 family. In terms of assembly, part of the 50S ribosomal subunit. Forms a cluster with proteins L3 and L19. In the 70S ribosome, L14 and L19 interact and together make contacts with the 16S rRNA in bridges B5 and B8.

Its function is as follows. Binds to 23S rRNA. Forms part of two intersubunit bridges in the 70S ribosome. The protein is Large ribosomal subunit protein uL14 of Desulfatibacillum aliphaticivorans.